We begin with the raw amino-acid sequence, 319 residues long: D-alanine--D-alanine ligase B (319 aa).

The ATP-grasp domain occupies Lys-117–Ala-312. Residue Ala-143–Thr-198 participates in ATP binding. Mg(2+)-binding residues include Asp-266, Glu-279, and Asn-281.

This sequence belongs to the D-alanine--D-alanine ligase family. Mg(2+) serves as cofactor. The cofactor is Mn(2+).

The protein localises to the cytoplasm. The enzyme catalyses 2 D-alanine + ATP = D-alanyl-D-alanine + ADP + phosphate + H(+). It participates in cell wall biogenesis; peptidoglycan biosynthesis. Cell wall formation. The protein is D-alanine--D-alanine ligase B of Pseudomonas syringae pv. tomato (strain ATCC BAA-871 / DC3000).